The primary structure comprises 342 residues: Isopentenyl-diphosphate delta-isomerase (342 aa).

Residue 11–12 (RK) coordinates substrate. FMN contacts are provided by residues Ser68, 69–71 (SMT), Ser99, and Asn128. Residue 99–101 (SQR) participates in substrate binding. Gln162 contributes to the substrate binding site. Glu163 serves as a coordination point for Mg(2+). FMN contacts are provided by residues Lys194, Ser219, Thr224, 275-277 (GVR), and 296-297 (AK).

This sequence belongs to the IPP isomerase type 2 family. Homooctamer. Dimer of tetramers. It depends on FMN as a cofactor. NADPH serves as cofactor. Requires Mg(2+) as cofactor.

The protein resides in the cytoplasm. The enzyme catalyses isopentenyl diphosphate = dimethylallyl diphosphate. Functionally, involved in the biosynthesis of isoprenoids. Catalyzes the 1,3-allylic rearrangement of the homoallylic substrate isopentenyl (IPP) to its allylic isomer, dimethylallyl diphosphate (DMAPP). This chain is Isopentenyl-diphosphate delta-isomerase, found in Legionella pneumophila (strain Lens).